Reading from the N-terminus, the 359-residue chain is Phosphoserine aminotransferase (359 aa).

Arg-41 serves as a coordination point for L-glutamate. Pyridoxal 5'-phosphate is bound by residues 75-76 (AS), Trp-101, Thr-152, Asp-171, and Gln-194. Residue Lys-195 is modified to N6-(pyridoxal phosphate)lysine. 236 to 237 (NT) contributes to the pyridoxal 5'-phosphate binding site.

It belongs to the class-V pyridoxal-phosphate-dependent aminotransferase family. SerC subfamily. In terms of assembly, homodimer. Pyridoxal 5'-phosphate is required as a cofactor.

The protein localises to the cytoplasm. It catalyses the reaction O-phospho-L-serine + 2-oxoglutarate = 3-phosphooxypyruvate + L-glutamate. The catalysed reaction is 4-(phosphooxy)-L-threonine + 2-oxoglutarate = (R)-3-hydroxy-2-oxo-4-phosphooxybutanoate + L-glutamate. It functions in the pathway amino-acid biosynthesis; L-serine biosynthesis; L-serine from 3-phospho-D-glycerate: step 2/3. Its pathway is cofactor biosynthesis; pyridoxine 5'-phosphate biosynthesis; pyridoxine 5'-phosphate from D-erythrose 4-phosphate: step 3/5. Catalyzes the reversible conversion of 3-phosphohydroxypyruvate to phosphoserine and of 3-hydroxy-2-oxo-4-phosphonooxybutanoate to phosphohydroxythreonine. The chain is Phosphoserine aminotransferase from Acinetobacter baylyi (strain ATCC 33305 / BD413 / ADP1).